The chain runs to 1454 residues: Beta-1,3-glucan-binding protein (1454 aa).

The propeptide occupies 1–197 (MSFDLTTPFD…KRSLEMRMMN (197 aa)). Asn-33, Asn-55, Asn-185, Asn-571, Asn-592, Asn-825, Asn-882, and Asn-1153 each carry an N-linked (GlcNAc...) asparagine glycan.

Belongs to the glycosyl hydrolase 16 family. As to quaternary structure, monomer. In terms of tissue distribution, expressed in the hepatopancreas and secreted into the hemolymph. Expressed at lower levels in muscle, pleopod and gill tissue.

The protein localises to the secreted. Functionally, involved in the recognition of invading microorganisms. Binds specifically to beta-1,3-glucan and activates the prophenoloxidase cascade. The protein is Beta-1,3-glucan-binding protein of Penaeus vannamei (Whiteleg shrimp).